The primary structure comprises 307 residues: Homoserine O-acetyltransferase (307 aa).

C142 functions as the Acyl-thioester intermediate in the catalytic mechanism. Residues K163 and S192 each contribute to the substrate site. H235 acts as the Proton acceptor in catalysis. Residue E237 is part of the active site. R249 serves as a coordination point for substrate.

This sequence belongs to the MetA family.

It localises to the cytoplasm. It carries out the reaction L-homoserine + acetyl-CoA = O-acetyl-L-homoserine + CoA. It participates in amino-acid biosynthesis; L-methionine biosynthesis via de novo pathway; O-acetyl-L-homoserine from L-homoserine: step 1/1. Its function is as follows. Transfers an acetyl group from acetyl-CoA to L-homoserine, forming acetyl-L-homoserine. The sequence is that of Homoserine O-acetyltransferase from Rhizobium johnstonii (strain DSM 114642 / LMG 32736 / 3841) (Rhizobium leguminosarum bv. viciae).